The following is a 371-amino-acid chain: DNA replication and repair protein RecF (371 aa).

Position 30–37 (Gly30–Thr37) interacts with ATP.

This sequence belongs to the RecF family.

Its subcellular location is the cytoplasm. The RecF protein is involved in DNA metabolism; it is required for DNA replication and normal SOS inducibility. RecF binds preferentially to single-stranded, linear DNA. It also seems to bind ATP. The protein is DNA replication and repair protein RecF of Staphylococcus epidermidis (strain ATCC 12228 / FDA PCI 1200).